The chain runs to 225 residues: Ribosomal RNA small subunit methyltransferase G (225 aa).

Residues G62, 113–114, and K130 contribute to the S-adenosyl-L-methionine site; that span reads AE.

This sequence belongs to the methyltransferase superfamily. RNA methyltransferase RsmG family.

It localises to the cytoplasm. In terms of biological role, specifically methylates the N7 position of a guanine in 16S rRNA. This chain is Ribosomal RNA small subunit methyltransferase G, found in Petrotoga mobilis (strain DSM 10674 / SJ95).